The sequence spans 313 residues: Putative phosphoribosylaminoimidazole-succinocarboxamide synthase 2 (313 aa).

Belongs to the SAICAR synthetase family.

The enzyme catalyses 5-amino-1-(5-phospho-D-ribosyl)imidazole-4-carboxylate + L-aspartate + ATP = (2S)-2-[5-amino-1-(5-phospho-beta-D-ribosyl)imidazole-4-carboxamido]succinate + ADP + phosphate + 2 H(+). It participates in purine metabolism; IMP biosynthesis via de novo pathway; 5-amino-1-(5-phospho-D-ribosyl)imidazole-4-carboxamide from 5-amino-1-(5-phospho-D-ribosyl)imidazole-4-carboxylate: step 1/2. In Mesorhizobium japonicum (strain LMG 29417 / CECT 9101 / MAFF 303099) (Mesorhizobium loti (strain MAFF 303099)), this protein is Putative phosphoribosylaminoimidazole-succinocarboxamide synthase 2 (purC2).